Reading from the N-terminus, the 258-residue chain is Small ribosomal subunit protein mS35 (258 aa).

Residues 1–39 (MAFNPLLSLLKADAIFLGQLSKSSFCATSRAFSVFYFTR) constitute a mitochondrion transit peptide.

Belongs to the mitochondrion-specific ribosomal protein mS35 family. As to quaternary structure, component of the mitochondrial small ribosomal subunit (mt-SSU). Mature yeast 74S mitochondrial ribosomes consist of a small (37S) and a large (54S) subunit. The 37S small subunit contains a 15S ribosomal RNA (15S mt-rRNA) and at least 32 different proteins. The 54S large subunit contains a 21S rRNA (21S mt-rRNA) and at least 45 different proteins.

It is found in the mitochondrion. Functionally, component of the mitochondrial ribosome (mitoribosome), a dedicated translation machinery responsible for the synthesis of mitochondrial genome-encoded proteins, including at least some of the essential transmembrane subunits of the mitochondrial respiratory chain. The mitoribosomes are attached to the mitochondrial inner membrane and translation products are cotranslationally integrated into the membrane. This chain is Small ribosomal subunit protein mS35 (rsm24), found in Schizosaccharomyces pombe (strain 972 / ATCC 24843) (Fission yeast).